Reading from the N-terminus, the 404-residue chain is Lipase lipl-3 (404 aa).

An N-terminal signal peptide occupies residues 1-20 (MCSSLCALLLVILAVHNVHA). A glycan (N-linked (GlcNAc...) asparagine) is linked at asparagine 65. Serine 168 acts as the Nucleophile in catalysis. N-linked (GlcNAc...) asparagine glycosylation occurs at asparagine 272. Residues aspartate 344 and histidine 376 each act as charge relay system in the active site.

It belongs to the AB hydrolase superfamily. Lipase family.

It is found in the secreted. It localises to the lysosome lumen. Its function is as follows. Lipase that, together with lipl-1, plays a role in the response to nutrient deprivation by controlling lipid metabolism. Specifically, involved in the breakdown of lipids during lipophagy, a process during which lipids contained in lipid droplets that have been delivered to lysosomes by autophagy are degraded. The polypeptide is Lipase lipl-3 (Caenorhabditis elegans).